The following is a 464-amino-acid chain: tRNA(Ile)-lysidine synthase (464 aa).

Residue 30–35 (SGGVDS) coordinates ATP.

Belongs to the tRNA(Ile)-lysidine synthase family.

Its subcellular location is the cytoplasm. The catalysed reaction is cytidine(34) in tRNA(Ile2) + L-lysine + ATP = lysidine(34) in tRNA(Ile2) + AMP + diphosphate + H(+). Its function is as follows. Ligates lysine onto the cytidine present at position 34 of the AUA codon-specific tRNA(Ile) that contains the anticodon CAU, in an ATP-dependent manner. Cytidine is converted to lysidine, thus changing the amino acid specificity of the tRNA from methionine to isoleucine. The chain is tRNA(Ile)-lysidine synthase from Shewanella oneidensis (strain ATCC 700550 / JCM 31522 / CIP 106686 / LMG 19005 / NCIMB 14063 / MR-1).